The chain runs to 102 residues: Co-chaperonin GroES (102 aa).

This sequence belongs to the GroES chaperonin family. As to quaternary structure, heptamer of 7 subunits arranged in a ring. Interacts with the chaperonin GroEL.

It localises to the cytoplasm. Together with the chaperonin GroEL, plays an essential role in assisting protein folding. The GroEL-GroES system forms a nano-cage that allows encapsulation of the non-native substrate proteins and provides a physical environment optimized to promote and accelerate protein folding. GroES binds to the apical surface of the GroEL ring, thereby capping the opening of the GroEL channel. This chain is Co-chaperonin GroES, found in Vibrio harveyi (Beneckea harveyi).